The sequence spans 391 residues: Shewanella-like protein phosphatase 2 (391 aa).

Mn(2+) is bound by residues Asp61, His63, Asp97, and Asn132. The active-site Proton donor is His133. Residues His232 and His295 each contribute to the Mn(2+) site.

Belongs to the metallophosphoesterase superfamily. SLP family. Mn(2+) serves as cofactor. In terms of tissue distribution, expressed in roots and siliques (at protein level).

Its subcellular location is the cytoplasm. It localises to the cytosol. Functionally, shows phosphatase activity, hydrolyzing the artificial substrate para-nitrophenylphosphate (pNPP) in vitro. The sequence is that of Shewanella-like protein phosphatase 2 from Arabidopsis thaliana (Mouse-ear cress).